A 144-amino-acid polypeptide reads, in one-letter code: Putative pre-16S rRNA nuclease (144 aa).

It belongs to the YqgF nuclease family.

The protein resides in the cytoplasm. In terms of biological role, could be a nuclease involved in processing of the 5'-end of pre-16S rRNA. The chain is Putative pre-16S rRNA nuclease from Picosynechococcus sp. (strain ATCC 27264 / PCC 7002 / PR-6) (Agmenellum quadruplicatum).